We begin with the raw amino-acid sequence, 91 residues long: UPF0250 protein Pfl01_4965 (91 aa).

The protein belongs to the UPF0250 family.

This chain is UPF0250 protein Pfl01_4965, found in Pseudomonas fluorescens (strain Pf0-1).